The following is a 91-amino-acid chain: Small ribosomal subunit protein uS19 (91 aa).

This sequence belongs to the universal ribosomal protein uS19 family.

Functionally, protein S19 forms a complex with S13 that binds strongly to the 16S ribosomal RNA. This is Small ribosomal subunit protein uS19 from Pseudomonas paraeruginosa (strain DSM 24068 / PA7) (Pseudomonas aeruginosa (strain PA7)).